The following is a 309-amino-acid chain: Ribonuclease Z (309 aa).

Zn(2+)-binding residues include His-63, His-65, Asp-67, His-68, His-145, Asp-216, and His-274. Catalysis depends on Asp-67, which acts as the Proton acceptor.

This sequence belongs to the RNase Z family. In terms of assembly, homodimer. Zn(2+) is required as a cofactor.

The enzyme catalyses Endonucleolytic cleavage of RNA, removing extra 3' nucleotides from tRNA precursor, generating 3' termini of tRNAs. A 3'-hydroxy group is left at the tRNA terminus and a 5'-phosphoryl group is left at the trailer molecule.. Functionally, zinc phosphodiesterase, which displays some tRNA 3'-processing endonuclease activity. Probably involved in tRNA maturation, by removing a 3'-trailer from precursor tRNA. The sequence is that of Ribonuclease Z from Streptococcus mutans serotype c (strain ATCC 700610 / UA159).